We begin with the raw amino-acid sequence, 407 residues long: Tyrosine--tRNA ligase 1 (407 aa).

L-tyrosine is bound at residue Y35. Residues 40–49 carry the 'HIGH' region motif; sequence PTGDSLHVGH. The L-tyrosine site is built by Y168 and Q172. The 'KMSKS' region signature appears at 228–232; it reads KMGKT. K231 provides a ligand contact to ATP. The 67-residue stretch at 340-406 folds into the S4 RNA-binding domain; sequence SSILDVLVHT…GKKKYYKIVI (67 aa).

It belongs to the class-I aminoacyl-tRNA synthetase family. TyrS type 1 subfamily. Homodimer.

It localises to the cytoplasm. It catalyses the reaction tRNA(Tyr) + L-tyrosine + ATP = L-tyrosyl-tRNA(Tyr) + AMP + diphosphate + H(+). Catalyzes the attachment of tyrosine to tRNA(Tyr) in a two-step reaction: tyrosine is first activated by ATP to form Tyr-AMP and then transferred to the acceptor end of tRNA(Tyr). The polypeptide is Tyrosine--tRNA ligase 1 (Clostridium acetobutylicum (strain ATCC 824 / DSM 792 / JCM 1419 / IAM 19013 / LMG 5710 / NBRC 13948 / NRRL B-527 / VKM B-1787 / 2291 / W)).